The chain runs to 435 residues: Probable histidine--tRNA ligase, cytoplasmic (435 aa).

Belongs to the class-II aminoacyl-tRNA synthetase family.

It localises to the cytoplasm. It carries out the reaction tRNA(His) + L-histidine + ATP = L-histidyl-tRNA(His) + AMP + diphosphate + H(+). This Encephalitozoon cuniculi (strain GB-M1) (Microsporidian parasite) protein is Probable histidine--tRNA ligase, cytoplasmic.